A 277-amino-acid chain; its full sequence is Xyloglucan endotransglucosylase/hydrolase protein 19 (277 aa).

Positions 1–21 are cleaved as a signal peptide; the sequence is MKSFTFLILFLFAAQSISVYA. The GH16 domain occupies 22 to 213; the sequence is GSFHKDVKIH…WSKAPFTAYY (192 aa). The Nucleophile role is filled by Glu-99. Residue Glu-103 is the Proton donor of the active site. Glu-103 lines the xyloglucan pocket. A glycan (N-linked (GlcNAc...) asparagine) is linked at Asn-107. Xyloglucan contacts are provided by residues 116-118, 126-128, 192-193, and Gly-197; these read HTN, DKE, and HW. Intrachain disulfides connect Cys-221-Cys-230 and Cys-262-Cys-276. Position 267 (Arg-267) interacts with xyloglucan.

Belongs to the glycosyl hydrolase 16 family. XTH group 2 subfamily. Post-translationally, contains at least one intrachain disulfide bond essential for its enzymatic activity. Root specific.

It localises to the secreted. Its subcellular location is the cell wall. The protein localises to the extracellular space. The protein resides in the apoplast. It catalyses the reaction breaks a beta-(1-&gt;4) bond in the backbone of a xyloglucan and transfers the xyloglucanyl segment on to O-4 of the non-reducing terminal glucose residue of an acceptor, which can be a xyloglucan or an oligosaccharide of xyloglucan.. Possesses xyloglucan endotransglucosylase (XET) activity in vitro. Does not possess xyloglucan endohydrolysis (XEH) activity. Cleaves and religates xyloglucan polymers, an essential constituent of the primary cell wall, and thereby participates in cell wall construction of growing tissues. Involved in cell proliferation in the tissue reunion process of wounded inflorescence stems. Maybe a downstream target of NAC071 as a consequence of auxin action in wounded stems. This chain is Xyloglucan endotransglucosylase/hydrolase protein 19, found in Arabidopsis thaliana (Mouse-ear cress).